We begin with the raw amino-acid sequence, 388 residues long: Lipid-A-disaccharide synthase (388 aa).

The protein belongs to the LpxB family.

It carries out the reaction a lipid X + a UDP-2-N,3-O-bis[(3R)-3-hydroxyacyl]-alpha-D-glucosamine = a lipid A disaccharide + UDP + H(+). It functions in the pathway bacterial outer membrane biogenesis; LPS lipid A biosynthesis. Functionally, condensation of UDP-2,3-diacylglucosamine and 2,3-diacylglucosamine-1-phosphate to form lipid A disaccharide, a precursor of lipid A, a phosphorylated glycolipid that anchors the lipopolysaccharide to the outer membrane of the cell. This Saccharophagus degradans (strain 2-40 / ATCC 43961 / DSM 17024) protein is Lipid-A-disaccharide synthase.